The following is a 359-amino-acid chain: Ribosomal RNA small subunit methyltransferase mra1 (359 aa).

A compositionally biased stretch (basic residues) spans 1 to 10 (MPTYSKRKSR). Disordered stretches follow at residues 1-62 (MPTY…EDEE) and 98-118 (VKSDEEKEDPNGASSKTVKAR). Phosphoserine is present on Ser-12. Positions 18–39 (KTNQPKFIKRSQSSETITSGET) are enriched in polar residues. Thr-33 is modified (phosphothreonine). Residue Ser-100 is modified to Phosphoserine. S-adenosyl-L-methionine-binding positions include Leu-287, Gly-314, 319 to 321 (GPD), and 334 to 339 (ISDYPL).

It belongs to the class IV-like SAM-binding methyltransferase superfamily. RNA methyltransferase NEP1 family. As to quaternary structure, homodimer.

The protein localises to the nucleus. It is found in the nucleolus. The enzyme catalyses a pseudouridine in rRNA + S-adenosyl-L-methionine = an N(1)-methylpseudouridine in rRNA + S-adenosyl-L-homocysteine + H(+). In terms of biological role, S-adenosyl-L-methionine-dependent pseudouridine N(1)-methyltransferase that methylates the pseudouridine corresponding to position 1189 (Psi1189) in S.cerevisiae 18S rRNA. Involved the biosynthesis of the hypermodified N1-methyl-N3-(3-amino-3-carboxypropyl) pseudouridine (m1acp3-Psi) conserved in eukaryotic 18S rRNA. Also has an essential role in 40S ribosomal subunit biogenesis independent on its methyltransferase activity, facilitating the incorporation of ribosomal protein S19 during the formation of pre-ribosomes. Essential for cell growth. It also has a key role in promoting the mating function. The protein is Ribosomal RNA small subunit methyltransferase mra1 of Schizosaccharomyces pombe (strain 972 / ATCC 24843) (Fission yeast).